The chain runs to 177 residues: Large ribosomal subunit protein uL6 (177 aa).

Belongs to the universal ribosomal protein uL6 family. As to quaternary structure, part of the 50S ribosomal subunit.

Functionally, this protein binds to the 23S rRNA, and is important in its secondary structure. It is located near the subunit interface in the base of the L7/L12 stalk, and near the tRNA binding site of the peptidyltransferase center. This Rickettsia massiliae (strain Mtu5) protein is Large ribosomal subunit protein uL6.